Here is a 107-residue protein sequence, read N- to C-terminus: Anti-adapter protein IraM (107 aa).

This sequence belongs to the IraM/RssC family.

It is found in the cytoplasm. Its function is as follows. Inhibits RpoS proteolysis by regulating RssB activity, thereby increasing the stability of the sigma stress factor RpoS during magnesium starvation. This chain is Anti-adapter protein IraM, found in Escherichia coli O17:K52:H18 (strain UMN026 / ExPEC).